The primary structure comprises 185 residues: Ribosome maturation factor RimM (185 aa).

Residues 106–185 form the PRC barrel domain; the sequence is SGEYYWKDLL…IIEVDWDPGF (80 aa).

It belongs to the RimM family. As to quaternary structure, binds ribosomal protein uS19.

The protein localises to the cytoplasm. Functionally, an accessory protein needed during the final step in the assembly of 30S ribosomal subunit, possibly for assembly of the head region. Essential for efficient processing of 16S rRNA. May be needed both before and after RbfA during the maturation of 16S rRNA. It has affinity for free ribosomal 30S subunits but not for 70S ribosomes. The chain is Ribosome maturation factor RimM from Sodalis glossinidius (strain morsitans).